The following is a 489-amino-acid chain: COX3 mRNA-specific translational activator PET494 (489 aa).

It is found in the mitochondrion inner membrane. Its function is as follows. Required for the expression of the mitochondrial gene for cytochrome c oxidase subunit III (COX3). This chain is COX3 mRNA-specific translational activator PET494 (PET494), found in Saccharomyces cerevisiae (strain ATCC 204508 / S288c) (Baker's yeast).